The primary structure comprises 477 residues: Glycogen synthase (477 aa).

Lysine 15 lines the ADP-alpha-D-glucose pocket.

It belongs to the glycosyltransferase 1 family. Bacterial/plant glycogen synthase subfamily.

It catalyses the reaction [(1-&gt;4)-alpha-D-glucosyl](n) + ADP-alpha-D-glucose = [(1-&gt;4)-alpha-D-glucosyl](n+1) + ADP + H(+). It participates in glycan biosynthesis; glycogen biosynthesis. Functionally, synthesizes alpha-1,4-glucan chains using ADP-glucose. This chain is Glycogen synthase, found in Shigella boydii serotype 18 (strain CDC 3083-94 / BS512).